An 82-amino-acid polypeptide reads, in one-letter code: Acyl carrier protein (82 aa).

The 75-residue stretch at 3 to 77 folds into the Carrier domain; it reads SSIFDKVQNI…QAIEFIQHAI (75 aa). The residue at position 37 (S37) is an O-(pantetheine 4'-phosphoryl)serine.

This sequence belongs to the acyl carrier protein (ACP) family. Post-translationally, 4'-phosphopantetheine is transferred from CoA to a specific serine of apo-ACP by AcpS. This modification is essential for activity because fatty acids are bound in thioester linkage to the sulfhydryl of the prosthetic group.

The protein localises to the plastid. The protein resides in the chloroplast. Its pathway is lipid metabolism; fatty acid biosynthesis. Functionally, carrier of the growing fatty acid chain in fatty acid biosynthesis. This chain is Acyl carrier protein, found in Gracilaria tenuistipitata var. liui (Red alga).